The following is a 579-amino-acid chain: Carotenoid-cleaving dioxygenase, mitochondrial (579 aa).

4 residues coordinate Fe cation: His-226, His-286, His-357, and His-573.

Belongs to the carotenoid oxygenase family. The cofactor is Fe(2+). As to expression, highly expressed in retinal pigment epithelium. Also expressed in stomach, small intestine, liver, testis, kidney, adrenal gland, pancreas, heart, skeletal muscle and prostate (at protein level).

The protein resides in the mitochondrion. The enzyme catalyses all-trans-beta-carotene + O2 = beta-ionone + all-trans-10'-apo-beta-carotenal. It catalyses the reaction 5-cis-lycopene + O2 = 5-cis-10'-apo-lycopenal + (3E,5E)-6,10-dimethylundeca-3,5,9-trien-2-one. It carries out the reaction 13-cis-lycopene + O2 = 13-cis-10'-apo-lycopenal + (3E,5E)-6,10-dimethylundeca-3,5,9-trien-2-one. The catalysed reaction is lutein + O2 = (3R,6R)-hydroxy-alpha-ionone + (3R)-3-hydroxy-10'-apo-beta-carotenal. The enzyme catalyses lutein + O2 = (3R,6R)-3-hydroxy-10'-apo-alpha-carotenal + (3R)-hydroxy-beta-ionone. It catalyses the reaction all-trans-zeaxanthin + 2 O2 = 4,9-dimethyldodeca-2,4,6,8,10-pentaenedial + 2 (3R)-hydroxy-beta-ionone. It carries out the reaction all-trans-zeaxanthin + O2 = (3R)-3-hydroxy-10'-apo-beta-carotenal + (3R)-hydroxy-beta-ionone. The catalysed reaction is beta-cryptoxanthin + O2 = all-trans-10'-apo-beta-carotenal + (3R)-hydroxy-beta-ionone. The enzyme catalyses all-trans-10'-apo-beta-carotenal + O2 = beta-ionone + 4,9-dimethyldodeca-2,4,6,8,10-pentaenedial. It catalyses the reaction (3R)-3-hydroxy-10'-apo-beta-carotenal + O2 = 4,9-dimethyldodeca-2,4,6,8,10-pentaenedial + (3R)-hydroxy-beta-ionone. It carries out the reaction (3R,6R)-3-hydroxy-10'-apo-alpha-carotenal + O2 = (3R,6R)-hydroxy-alpha-ionone + 4,9-dimethyldodeca-2,4,6,8,10-pentaenedial. In terms of biological role, broad specificity mitochondrial dioxygenase that mediates the asymmetric oxidative cleavage of carotenoids. Cleaves carotenes (pure hydrocarbon carotenoids) such as all-trans-beta-carotene and lycopene as well as xanthophylls (oxygenated carotenoids) such as zeaxanthin, lutein and beta-cryptoxanthin at both the 9,10 and the 9',10' carbon-carbon double bond. Through its function in carotenoids metabolism regulates oxidative stress and the production of important signaling molecules. This is Carotenoid-cleaving dioxygenase, mitochondrial from Homo sapiens (Human).